Consider the following 631-residue polypeptide: UvrABC system protein C (631 aa).

In terms of domain architecture, GIY-YIG spans 26-105 (SSPGVYQFKN…IKELKPRYNV (80 aa)). In terms of domain architecture, UVR spans 219–254 (SATIRSLNERMLSFAKELKFEQAAELKTQIDSLKRY).

This sequence belongs to the UvrC family. As to quaternary structure, interacts with UvrB in an incision complex.

Its subcellular location is the cytoplasm. Functionally, the UvrABC repair system catalyzes the recognition and processing of DNA lesions. UvrC both incises the 5' and 3' sides of the lesion. The N-terminal half is responsible for the 3' incision and the C-terminal half is responsible for the 5' incision. This chain is UvrABC system protein C, found in Chlorobium phaeobacteroides (strain DSM 266 / SMG 266 / 2430).